Here is a 511-residue protein sequence, read N- to C-terminus: MDQPAGLQVDYIFRGVEHAVRVVVSGQVLELEVEDRMTADQWRGEFDANFIEDLTHKTGNFKQFSIFCNMLESALTQSSESVTLDLLTYTDLESLRSRKLGGRPGALAPRSAQLNSKRYLILIYSVEFDRIHYPLPLPYQGKPDPVVLQGIIRSLKEELGHLRGLNGGQDARETEIWHLREQVTRLTSEKRELEAQLGRSREEALAGRAARQEAESLRGLVRGLELELRQERGLGGRAAGRRSQDSRRLAKELEEVKASERNLRARLKTLNSELAMYRRGRRTLPPVAVREGRASSSRERSTSRGRAVTRSSSRESSRGARGRGRPAHPSPSPTGSRAPRFDPTAFVKAKEKKQREIRMKQQQQQRNRMGSGGSGDGPSVSWSQQTRPAAAVTGRGDAVNRSRNRSSSVDSFRSRCSSVSSCSELEDFSHSVSRSRRCRGRGKPPSPTPWSRSKTKSTTQERSDHQRHLASSGGWVPIKEYSSDFQGADMAEIDARLKALQEYMNRLDTRS.

Residue Met1 is modified to N-acetylmethionine. A head domain region spans residues 1-143; it reads MDQPAGLQVD…PLPLPYQGKP (143 aa). Coiled coils occupy residues 176-203 and 246-273; these read IWHLREQVTRLTSEKRELEAQLGRSREE and SRRLAKELEEVKASERNLRARLKTLNSE. Thr283 carries the post-translational modification Phosphothreonine. Disordered regions lie at residues 284–413 and 429–476; these read LPPV…DSFR and SHSV…GGWV. A compositionally biased stretch (basic and acidic residues) spans 290 to 302; the sequence is REGRASSSRERST. Ser330 and Ser332 each carry phosphoserine. The segment covering 360–369 has biased composition (low complexity); that stretch reads KQQQQQRNRM. Phosphoserine occurs at positions 371 and 374. Residues 433 to 442 are compositionally biased toward basic residues; the sequence is SRSRRCRGRG. Ser446 bears the Phosphoserine mark. The segment covering 449 to 458 has biased composition (polar residues); the sequence is PWSRSKTKST. Ser472 carries the phosphoserine modification.

This sequence belongs to the CCDC61 family. Forms homodimers (via head domain). Interacts with CEP170. Interacts with PCM1 and CEP131. Binds tubulin.

It localises to the cytoplasm. The protein resides in the cytoskeleton. The protein localises to the microtubule organizing center. Its subcellular location is the centrosome. It is found in the centriolar satellite. It localises to the cilium basal body. Its function is as follows. Microtubule-binding centrosomal protein required for centriole cohesion, independently of the centrosome-associated protein/CEP250 and rootletin/CROCC linker. In interphase, required for anchoring microtubule at the mother centriole subdistal appendages and for centrosome positioning. During mitosis, may be involved in spindle assembly and chromatin alignment by regulating the organization of spindle microtubules into a symmetrical structure. Plays a non-essential role in ciliogenesis. This Mus musculus (Mouse) protein is Centrosomal protein CCDC61.